Reading from the N-terminus, the 122-residue chain is UPF0231 protein VIBHAR_03438 (122 aa).

It belongs to the UPF0231 family.

The protein is UPF0231 protein VIBHAR_03438 of Vibrio campbellii (strain ATCC BAA-1116).